The following is a 585-amino-acid chain: Arginine--tRNA ligase (585 aa).

Residues 126–136 (PNIAKEMHVGH) carry the 'HIGH' region motif.

Belongs to the class-I aminoacyl-tRNA synthetase family. In terms of assembly, monomer.

The protein localises to the cytoplasm. The enzyme catalyses tRNA(Arg) + L-arginine + ATP = L-arginyl-tRNA(Arg) + AMP + diphosphate. The sequence is that of Arginine--tRNA ligase from Trichodesmium erythraeum (strain IMS101).